Reading from the N-terminus, the 188-residue chain is PRA1 family protein 3 (188 aa).

The residue at position 1 (methionine 1) is an N-acetylmethionine. Residues methionine 1–arginine 35 lie on the Cytoplasmic side of the membrane. 2 consecutive transmembrane segments (helical) span residues valine 36 to serine 56 and valine 57 to phenylalanine 77. Over threonine 78 to arginine 92 the chain is Cytoplasmic. 2 consecutive transmembrane segments (helical) span residues methionine 93–isoleucine 113 and methionine 115–isoleucine 135. A required for homodimer formation and heterodimer formation with ARL6IP1 region spans residues methionine 103–glycine 117. The Cytoplasmic segment spans residues histidine 136–glutamate 188. A targeting to endoplasmic reticulum membrane region spans residues histidine 136–glutamate 188.

This sequence belongs to the PRA1 family. In terms of assembly, homodimer. Heterodimer with ARL6IP1. Forms multimers. Interacts with ARL6. Interacts with prenylated RAB1A and RAB3A. Interacts with SLC1A1/EAAC1. Interacts with RTN2 (via first transmembrane domain). Does not interact with VAMP1, VAMP2 or VAMP3. As to expression, ubiquitous. Most abundant in heart and brain. In the embryonic brain cortex, expressed in neurons and astrocytes.

It is found in the endoplasmic reticulum membrane. Its subcellular location is the cell membrane. It localises to the cytoplasm. The protein resides in the cytoskeleton. Its function is as follows. Regulates intracellular concentrations of taurine and glutamate. Negatively modulates SLC1A1/EAAC1 glutamate transport activity by decreasing its affinity for glutamate in a PKC activity-dependent manner. Plays a role in the retention of SLC1A1/EAAC1 in the endoplasmic reticulum. In Rattus norvegicus (Rat), this protein is PRA1 family protein 3 (Arl6ip5).